We begin with the raw amino-acid sequence, 304 residues long: NSITYNFENINSNVDNGNQSKNISDLSYTDQKEILEKIVSYIVDISLYDIENTALNAAEQLLSDNSVDEKTLKKRAQSLKKLSSIMERYAGGKRNDKKAKKYDTQDVVGYIMHGISTINKEMKNQNENVPEHVQHNAEANVEHDAEENVEHDAEENVEHDAEENAEENVEENVEEVEENVEENVEENVEENVEENVEENVEENVEEVEENVEENVEENVEENVEENVEENVEENVEENVEENVEENVEEYDEENVEEVEENVEENVEENVEENVEENVEENVEENVEENVEEYDEENVEEHNGI.

N-linked (GlcNAc...) asparagine glycosylation is found at N18 and N22. Residues 142–159 (EHDAEENVEHDAEENVEH) are compositionally biased toward basic and acidic residues. The interval 142-304 (EHDAEENVEH…EENVEEHNGI (163 aa)) is disordered. The segment covering 160–298 (DAEENAEENV…NVEEYDEENV (139 aa)) has biased composition (acidic residues).

The protein resides in the cell membrane. Its function is as follows. May disrupt the normal intermolecular interactions of the cytoplasmic domain of band 3 and thereby facilitate the invagination of the red cell membrane which is necessary for the formation of the parasitophorous vacuole. This chain is Ring-infected erythrocyte surface antigen (RESA), found in Plasmodium falciparum (isolate Palo Alto / Uganda).